The primary structure comprises 140 residues: uncharacterized protein (140 aa).

Helical transmembrane passes span 4 to 21 (ILKF…YLFG) and 26 to 48 (LVKV…SGYL).

This sequence belongs to the bacteriophage holin family. Cp-1 holin subfamily.

It localises to the cell membrane. This is an uncharacterized protein from Listeria monocytogenes serovar 1/2a (strain ATCC BAA-679 / EGD-e).